The following is a 344-amino-acid chain: S-methyl-5'-thioadenosine phosphorylase (344 aa).

Phosphate contacts are provided by residues Thr-45, 88-89 (RH), and 121-122 (SA). Met-238 lines the substrate pocket. Ser-239 is a binding site for phosphate. Residue 262–264 (DYD) participates in substrate binding.

Belongs to the PNP/MTAP phosphorylase family. MTAP subfamily. As to quaternary structure, homotrimer.

It is found in the cytoplasm. Its subcellular location is the nucleus. It catalyses the reaction S-methyl-5'-thioadenosine + phosphate = 5-(methylsulfanyl)-alpha-D-ribose 1-phosphate + adenine. The protein operates within amino-acid biosynthesis; L-methionine biosynthesis via salvage pathway; S-methyl-5-thio-alpha-D-ribose 1-phosphate from S-methyl-5'-thioadenosine (phosphorylase route): step 1/1. In terms of biological role, catalyzes the reversible phosphorylation of S-methyl-5'-thioadenosine (MTA) to adenine and 5-methylthioribose-1-phosphate. Involved in the breakdown of MTA, a major by-product of polyamine biosynthesis. Responsible for the first step in the methionine salvage pathway after MTA has been generated from S-adenosylmethionine. Has broad substrate specificity with 6-aminopurine nucleosides as preferred substrates. The protein is S-methyl-5'-thioadenosine phosphorylase of Candida albicans (strain WO-1) (Yeast).